A 255-amino-acid polypeptide reads, in one-letter code: 4-hydroxy-tetrahydrodipicolinate reductase (255 aa).

Residues 9–14, 89–91, and 115–118 each bind NAD(+); these read GFKGRM, GTT, and APNF. H145 (proton donor/acceptor) is an active-site residue. H146 lines the (S)-2,3,4,5-tetrahydrodipicolinate pocket. The active-site Proton donor is K149. 155–156 provides a ligand contact to (S)-2,3,4,5-tetrahydrodipicolinate; sequence GT.

Belongs to the DapB family.

It localises to the cytoplasm. The enzyme catalyses (S)-2,3,4,5-tetrahydrodipicolinate + NAD(+) + H2O = (2S,4S)-4-hydroxy-2,3,4,5-tetrahydrodipicolinate + NADH + H(+). It catalyses the reaction (S)-2,3,4,5-tetrahydrodipicolinate + NADP(+) + H2O = (2S,4S)-4-hydroxy-2,3,4,5-tetrahydrodipicolinate + NADPH + H(+). The protein operates within amino-acid biosynthesis; L-lysine biosynthesis via DAP pathway; (S)-tetrahydrodipicolinate from L-aspartate: step 4/4. Its function is as follows. Catalyzes the conversion of 4-hydroxy-tetrahydrodipicolinate (HTPA) to tetrahydrodipicolinate. The sequence is that of 4-hydroxy-tetrahydrodipicolinate reductase from Streptococcus mutans serotype c (strain ATCC 700610 / UA159).